Here is a 180-residue protein sequence, read N- to C-terminus: uncharacterized protein (180 aa).

This is an uncharacterized protein from Homo sapiens (Human).